The chain runs to 168 residues: Cyclin-dependent kinase 4 inhibitor C (168 aa).

4 ANK repeats span residues 4 to 33 (PWGN…NVNA), 37 to 65 (FGRT…NPDL), 69 to 98 (TGFA…DVNI), and 102 to 132 (EGNL…NVGH).

Belongs to the CDKN2 cyclin-dependent kinase inhibitor family. Heterodimer of p18 with CDK6. In terms of tissue distribution, highest levels found in skeletal muscle. Also found in pancreas and heart.

In terms of biological role, interacts strongly with CDK6, weakly with CDK4. Inhibits cell growth and proliferation with a correlated dependence on endogenous retinoblastoma protein RB. In Homo sapiens (Human), this protein is Cyclin-dependent kinase 4 inhibitor C (CDKN2C).